Reading from the N-terminus, the 548-residue chain is Medium/long-chain-fatty-acid--CoA/3-oxocholest-4-en-26-oate--CoA ligase (548 aa).

Residues 174-182 (TGGTTGFPK), Asp415, Arg430, and Lys521 each bind ATP. Residues 520–541 (GKPDYRWAKEQTEARPADDVHA) are compositionally biased toward basic and acidic residues. The interval 520 to 548 (GKPDYRWAKEQTEARPADDVHAGHVTSGG) is disordered.

The protein belongs to the ATP-dependent AMP-binding enzyme family.

The enzyme catalyses a medium-chain fatty acid + ATP + CoA = a medium-chain fatty acyl-CoA + AMP + diphosphate. It catalyses the reaction a long-chain fatty acid + ATP + CoA = a long-chain fatty acyl-CoA + AMP + diphosphate. The catalysed reaction is (25S)-3-oxocholest-4-en-26-oate + ATP + CoA = (25S)-3-oxocholest-4-en-26-oyl-CoA + AMP + diphosphate. The protein operates within lipid metabolism; fatty acid biosynthesis. It functions in the pathway steroid metabolism; cholesterol metabolism. In terms of biological role, catalyzes the activation of medium/long-chain fatty acids as acyl-coenzyme A (acyl-CoA), which are then transferred to the multifunctional polyketide synthase (PKS) type III for further chain extension. Also involved in the degradation of cholesterol via the degradation of the side chains of C-24 branched-chain sterols. Catalyzes the ATP-dependent CoA thioesterification of the sterol 3-oxocholest-4-en-26-oate to yield 3-oxocholest-4-en-26-oyl-CoA. This is Medium/long-chain-fatty-acid--CoA/3-oxocholest-4-en-26-oate--CoA ligase from Mycobacterium bovis (strain ATCC BAA-935 / AF2122/97).